The following is a 193-amino-acid chain: Thymidine kinase (193 aa).

ATP-binding positions include 9 to 16 (STMNAGKS) and 87 to 90 (DEAQ). Glutamate 88 functions as the Proton acceptor in the catalytic mechanism. Zn(2+) is bound by residues cysteine 145, cysteine 147, cysteine 182, and histidine 185.

This sequence belongs to the thymidine kinase family. Homotetramer.

The protein localises to the cytoplasm. It carries out the reaction thymidine + ATP = dTMP + ADP + H(+). The protein is Thymidine kinase of Haemophilus influenzae (strain ATCC 51907 / DSM 11121 / KW20 / Rd).